The sequence spans 183 residues: Bifunctional protein PyrR (183 aa).

The PRPP-binding motif lies at 102 to 114 (VVLVDDVLFSGRT).

Belongs to the purine/pyrimidine phosphoribosyltransferase family. PyrR subfamily.

The enzyme catalyses UMP + diphosphate = 5-phospho-alpha-D-ribose 1-diphosphate + uracil. In terms of biological role, regulates the transcription of the pyrimidine nucleotide (pyr) operon in response to exogenous pyrimidines. Functionally, also displays a weak uracil phosphoribosyltransferase activity which is not physiologically significant. The polypeptide is Bifunctional protein PyrR (Leifsonia xyli subsp. xyli (strain CTCB07)).